We begin with the raw amino-acid sequence, 284 residues long: Isopentenyl-diphosphate Delta-isomerase II, chloroplastic (284 aa).

The N-terminal 45 residues, 1 to 45 (MSASSLFNLPLIRLRSLALSSSFSSFRFAHRPLSSISPRKLPNFR), are a transit peptide targeting the chloroplast. Residue Ala-46 is modified to N-acetylalanine. Lys-88 provides a ligand contact to substrate. Mg(2+) contacts are provided by His-92 and His-104. Positions 102-254 (LLHRAFSVFL…GLKLSPWFRL (153 aa)) constitute a Nudix hydrolase domain. Substrate contacts are provided by Arg-123 and Lys-127. Residue Cys-139 is part of the active site. A substrate-binding site is contributed by Ser-140. Positions 140–170 (SHPLYRESELIQDNALGVRNAAQRKLLDELG) match the Nudix box motif. Mg(2+) contacts are provided by Glu-199 and Glu-201. Glu-201 is an active-site residue.

The protein belongs to the IPP isomerase type 1 family. Requires Mg(2+) as cofactor.

Its subcellular location is the plastid. The protein localises to the chloroplast. It carries out the reaction isopentenyl diphosphate = dimethylallyl diphosphate. It functions in the pathway isoprenoid biosynthesis; dimethylallyl diphosphate biosynthesis; dimethylallyl diphosphate from isopentenyl diphosphate: step 1/1. It participates in porphyrin-containing compound metabolism; chlorophyll biosynthesis. Its function is as follows. Catalyzes the 1,3-allylic rearrangement of the homoallylic substrate isopentenyl (IPP) to its highly electrophilic allylic isomer, dimethylallyl diphosphate (DMAPP). This is Isopentenyl-diphosphate Delta-isomerase II, chloroplastic (IPP2) from Arabidopsis thaliana (Mouse-ear cress).